We begin with the raw amino-acid sequence, 499 residues long: NADH-quinone oxidoreductase subunit N (499 aa).

14 helical membrane passes run 16–36 (AAFS…LDAF), 42–62 (AIPW…ITHL), 77–97 (GGFV…TILL), 109–129 (YGEV…LGSA), 133–153 (VSIF…TGFI), 167–187 (FLLG…MYGA), 208–228 (LLFW…VSAA), 252–272 (ATKA…VPGG), 274–294 (WQLS…VMAL), 302–322 (LLAY…SAGT), 327–347 (AGAL…FGVM), 376–396 (GSTM…GGFI), 411–433 (TWLV…RVVY), and 463–483 (GTLV…GGVL).

The protein belongs to the complex I subunit 2 family. In terms of assembly, NDH-1 is composed of 14 different subunits. Subunits NuoA, H, J, K, L, M, N constitute the membrane sector of the complex.

It localises to the cell inner membrane. It carries out the reaction a quinone + NADH + 5 H(+)(in) = a quinol + NAD(+) + 4 H(+)(out). Its function is as follows. NDH-1 shuttles electrons from NADH, via FMN and iron-sulfur (Fe-S) centers, to quinones in the respiratory chain. The immediate electron acceptor for the enzyme in this species is believed to be a menaquinone. Couples the redox reaction to proton translocation (for every two electrons transferred, four hydrogen ions are translocated across the cytoplasmic membrane), and thus conserves the redox energy in a proton gradient. This Salinibacter ruber (strain DSM 13855 / M31) protein is NADH-quinone oxidoreductase subunit N.